The sequence spans 621 residues: Elongation factor 4 (621 aa).

In terms of domain architecture, tr-type G spans 21–203; the sequence is DLIRNICIIA…AIVKRVPPPK (183 aa). Residues 33-38 and 150-153 contribute to the GTP site; these read DHGKTT and NKID.

Belongs to the TRAFAC class translation factor GTPase superfamily. Classic translation factor GTPase family. LepA subfamily.

The protein resides in the cell inner membrane. It carries out the reaction GTP + H2O = GDP + phosphate + H(+). Functionally, required for accurate and efficient protein synthesis under certain stress conditions. May act as a fidelity factor of the translation reaction, by catalyzing a one-codon backward translocation of tRNAs on improperly translocated ribosomes. Back-translocation proceeds from a post-translocation (POST) complex to a pre-translocation (PRE) complex, thus giving elongation factor G a second chance to translocate the tRNAs correctly. Binds to ribosomes in a GTP-dependent manner. The chain is Elongation factor 4 from Thermotoga maritima (strain ATCC 43589 / DSM 3109 / JCM 10099 / NBRC 100826 / MSB8).